The sequence spans 847 residues: Protein IRS1 (847 aa).

3 disordered regions span residues 1–82, 607–627, and 715–847; these read MAQR…NFWH, WLME…ATMP, and QVIP…HVHH. The span at 16 to 25 shows a compositional bias: gly residues; that stretch reads RGRGAGGPSG. The segment covering 26–56 has biased composition (low complexity); sequence VGSSPPSSCVPMGATSTAGTGASAAPTATPG. The segment covering 723-733 has biased composition (acidic residues); it reads EPEDDDEDPTY. The segment covering 833 to 847 has biased composition (basic residues); it reads RPKKCQTHAPHHVHH.

Belongs to the herpesviridae US22 family. As to quaternary structure, interacts (via N-terminus) with the viral DNA polymerase accessory subunit UL44. Interacts (via C-terminus) with host EIF2AK2.

Its subcellular location is the virion. The protein resides in the host cytoplasm. It is found in the host nucleus. Acts as a transactivator along with IE2, and is required for oriLyt-dependent DNA replication in the transient transfection replication assay using native promoters. The protein is Protein IRS1 (IRS1) of Human cytomegalovirus (strain Merlin) (HHV-5).